Reading from the N-terminus, the 141-residue chain is uncharacterized protein (141 aa).

The protein resides in the cytoplasm. This is an uncharacterized protein from Homo sapiens (Human).